Here is a 1707-residue protein sequence, read N- to C-terminus: Kinesin-like protein KIF1A (1707 aa).

A Kinesin motor domain is found at 5 to 354 (SVKVAVRVRP…LRYADRAKQI (350 aa)). G102, K103, S104, Y105, and S215 together coordinate ATP. Residue S104 participates in Mg(2+) binding. Positions 439 to 466 (SEEAIERLKETEKIIAELNETWEEKLRR) form a coiled coil. One can recognise an FHA domain in the interval 525-581 (TRVGREDAERRQDIVLSGHFIKEEHCIFRSDSRGGGEAVVTLEPCEGADTYVNGKKV). Coiled-coil stretches lie at residues 637–671 (EKQG…LLEQ) and 811–831 (LEKL…AAEV). Residues 657 to 1105 (QYRREREEAT…LCKDVLSPLR (449 aa)) are required for interaction with CALM1, PPFIA2 and TANC2. Disordered stretches follow at residues 1424–1462 (PVPE…EVPN) and 1536–1576 (TDVR…EKEP). Over residues 1429 to 1453 (LSPASSEDSESRSSSGASSPLSAEG) the composition is skewed to low complexity. The region spanning 1592–1690 (IVSKKGYLHF…WLYAFNPLLA (99 aa)) is the PH domain.

This sequence belongs to the TRAFAC class myosin-kinesin ATPase superfamily. Kinesin family. Unc-104 subfamily. Dimeric motor; dimerization is required for ATP-driven processive motility. Monomer in vitro. Interacts with PPFIA1 and PPFIA4. Interacts with CALM1; the interaction is increased in presence of calcium and increases neuronal dense core vesicles motility. Interacts with PPFIA2 and TANC2; both interactions allow the recruitment of neuronal dense core vesicles to dendritic spines and decrease in presence of calcium. Interacts with SYT4 (unphosphorylated) and SYT11; both interactions increase in presence of calcium. Interacts with MADD.

Its subcellular location is the cytoplasm. It is found in the cytoskeleton. It localises to the cell projection. The protein localises to the neuron projection. The protein resides in the axon. Its subcellular location is the perinuclear region. It is found in the synapse. It localises to the cytoplasmic vesicle. The protein localises to the secretory vesicle. The protein resides in the neuronal dense core vesicle membrane. The catalysed reaction is ATP + H2O + a kinesin associated with a microtubule at position (n) = ADP + phosphate a kinesin associated with a microtubule at position (n+1, toward the plus end).. Its function is as follows. Kinesin motor with a plus-end-directed microtubule motor activity, involved in anterograde axonal transport of synaptic vesicle precursors. Also required for neuronal dense core vesicles (DCVs) transport to the dendritic spines and axons. The interaction calcium-dependent with CALM1 increases vesicle motility and interaction with the scaffolding proteins PPFIA2 and TANC2 recruits DCVs to synaptic sites. The chain is Kinesin-like protein KIF1A from Rattus norvegicus (Rat).